Here is a 60-residue protein sequence, read N- to C-terminus: Protein translocase subunit SecE (60 aa).

The Cytoplasmic portion of the chain corresponds to 1-31; that stretch reads MFARLIRYFQEARAELARVTWPTREQVVEGT. Residues 32 to 52 form a helical membrane-spanning segment; it reads QAILLFTLAFMVILGLYDTVF. The Extracellular segment spans residues 53–60; sequence RFLIGLLR.

The protein belongs to the SecE/SEC61-gamma family. Component of the Sec protein translocase complex. Heterotrimer consisting of SecY, SecE and SecG subunits. The heterotrimers can form oligomers, although 1 heterotrimer is thought to be able to translocate proteins. Interacts with SecDF, and other proteins may be involved. The channel interacts with SecA via subunit SecY.

The protein localises to the cell inner membrane. Functionally, essential subunit of the protein translocation channel SecYEG. Clamps together the 2 halves of SecY. May contact the channel plug during translocation. This is Protein translocase subunit SecE from Thermus thermophilus (strain ATCC 27634 / DSM 579 / HB8).